The primary structure comprises 273 residues: Proteasome subunit beta type-10 (273 aa).

Met-1 is modified (N-acetylmethionine). Positions 1-39 (MLKQAVEHRGGFSFENCQRNASLEHVLPGLRVPLARKTG) are cleaved as a propeptide — removed in mature form. The active-site Nucleophile is Thr-40. The residue at position 230 (Ser-230) is a Phosphoserine.

It belongs to the peptidase T1B family. As to quaternary structure, the 26S proteasome consists of a 20S proteasome core and two 19S regulatory subunits. The 20S proteasome core is composed of 28 subunits that are arranged in four stacked rings, resulting in a barrel-shaped structure. The two end rings are each formed by seven alpha subunits, and the two central rings are each formed by seven beta subunits. The catalytic chamber with the active sites is on the inside of the barrel. Component of the immunoproteasome, where it displaces the equivalent housekeeping subunit PSMB7. Component of the spermatoproteasome, a form of the proteasome specifically found in testis. In terms of processing, autocleaved. The resulting N-terminal Thr residue of the mature subunit is responsible for the nucleophile proteolytic activity.

The protein localises to the cytoplasm. Its subcellular location is the nucleus. It catalyses the reaction Cleavage of peptide bonds with very broad specificity.. Its function is as follows. The proteasome is a multicatalytic proteinase complex which is characterized by its ability to cleave peptides with Arg, Phe, Tyr, Leu, and Glu adjacent to the leaving group at neutral or slightly basic pH. The proteasome has an ATP-dependent proteolytic activity. This subunit is involved in antigen processing to generate class I binding peptides. The chain is Proteasome subunit beta type-10 (Psmb10) from Rattus norvegicus (Rat).